The primary structure comprises 304 residues: Tetrahydromethanopterin S-methyltransferase subunit E (304 aa).

6 helical membrane-spanning segments follow: residues 3–23, 86–106, 131–151, 152–172, 233–253, and 263–283; these read PLIG…AGAS, PLFA…TFAV, HTPV…VVSY, LMTV…IWGI, PVTG…TTVF, and WISV…NWKI.

Belongs to the MtrE family. As to quaternary structure, the complex is composed of 8 subunits; MtrA, MtrB, MtrC, MtrD, MtrE, MtrF, MtrG and MtrH.

It is found in the cell membrane. The catalysed reaction is 5-methyl-5,6,7,8-tetrahydromethanopterin + coenzyme M + 2 Na(+)(in) = 5,6,7,8-tetrahydromethanopterin + methyl-coenzyme M + 2 Na(+)(out). It participates in one-carbon metabolism; methanogenesis from CO(2); methyl-coenzyme M from 5,10-methylene-5,6,7,8-tetrahydromethanopterin: step 2/2. Functionally, part of a complex that catalyzes the formation of methyl-coenzyme M and tetrahydromethanopterin from coenzyme M and methyl-tetrahydromethanopterin. This is an energy-conserving, sodium-ion translocating step. The sequence is that of Tetrahydromethanopterin S-methyltransferase subunit E from Methanosarcina acetivorans (strain ATCC 35395 / DSM 2834 / JCM 12185 / C2A).